The following is a 633-amino-acid chain: tRNA uridine 5-carboxymethylaminomethyl modification enzyme MnmG (633 aa).

Residue 18 to 23 (GAGHAG) participates in FAD binding. The interval 208–232 (PRVNGNTIDFDKTEEQPGDKTPNHF) is disordered. Basic and acidic residues predominate over residues 216–229 (DFDKTEEQPGDKTP). Residue 279 to 293 (GPRYCPSIEDKIVRF) coordinates NAD(+).

Belongs to the MnmG family. Homodimer. Heterotetramer of two MnmE and two MnmG subunits. The cofactor is FAD.

It is found in the cytoplasm. Its function is as follows. NAD-binding protein involved in the addition of a carboxymethylaminomethyl (cmnm) group at the wobble position (U34) of certain tRNAs, forming tRNA-cmnm(5)s(2)U34. The polypeptide is tRNA uridine 5-carboxymethylaminomethyl modification enzyme MnmG (Lacticaseibacillus paracasei (strain ATCC 334 / BCRC 17002 / CCUG 31169 / CIP 107868 / KCTC 3260 / NRRL B-441) (Lactobacillus paracasei)).